An 892-amino-acid chain; its full sequence is Alpha-actinin-1 (892 aa).

M1 carries the N-acetylmethionine modification. The segment at M1–H247 is actin-binding. S6 carries the post-translational modification Phosphoserine. Position 12 is a phosphotyrosine; by FAK1 (Y12). 2 consecutive Calponin-homology (CH) domains span residues K31–A135 and T144–S250. 2 positions are modified to N6-acetyllysine: K95 and K195. 4 Spectrin repeats span residues Q274–N384, H394–R499, Q509–E620, and R630–N733. An interaction with DDN region spans residues Q274 to N733. S471 carries the post-translational modification Phosphoserine. The residue at position 676 (K676) is an N6-acetyllysine. S677 is subject to Phosphoserine. 2 EF-hand domains span residues E746–D781 and Q787–D822. D759, D761, S763, T765, and E770 together coordinate Ca(2+). S890 carries the post-translational modification Phosphoserine.

It belongs to the alpha-actinin family. As to quaternary structure, homodimer; antiparallel. Interacts with MYOZ2, TTID and LPP. Interacts with DDN. Interacts with PSD. Interacts with MICALL2. Interacts with DNM2 and CTTN. Interacts with PDLIM1. Interacts with PDLIM2. Interacts with PDLIM4 (via PDZ domain). Interacts with IGSF8.

The protein resides in the cytoplasm. It localises to the cytoskeleton. It is found in the myofibril. Its subcellular location is the sarcomere. The protein localises to the z line. The protein resides in the cell membrane. It localises to the cell junction. It is found in the cell projection. Its subcellular location is the ruffle. Functionally, F-actin cross-linking protein which is thought to anchor actin to a variety of intracellular structures. Association with IGSF8 regulates the immune synapse formation and is required for efficient T-cell activation. The chain is Alpha-actinin-1 (ACTN1) from Bos taurus (Bovine).